The primary structure comprises 589 residues: Protein drl-1 (589 aa).

Residues 1-51 (MHSEEKYLHIPNNTKYPEIIVEEEEEDPSEEERSELSETDDVATPLRPSDT) form a disordered region. Residues 20 to 41 (IVEEEEEDPSEEERSELSETDD) are compositionally biased toward acidic residues. Positions 97–373 (WRINEDVMKD…QNLLESHGSK (277 aa)) constitute a Protein kinase domain. Transmembrane regions (helical) follow at residues 429 to 449 (GFIPFIRWYMSRILIFSVLLV), 456 to 476 (LCAALSLAAVAGGVFFAIFLI), and 491 to 511 (GFVVLIALILLPIIILLTTLC).

It belongs to the protein kinase superfamily. STE Ser/Thr protein kinase family. As to expression, expressed in vulval and body wall muscles, hypodermis, seam cells and tissues next to pharynx and anus.

Its subcellular location is the membrane. Negatively regulates lifespan and health span probably by participating in nutrient sensing. The chain is Protein drl-1 from Caenorhabditis elegans.